The following is a 537-amino-acid chain: Extracellular exo-inulinase inuE (537 aa).

A signal peptide spans 1-19; the sequence is MARLLKAVTVCALAGIAHA. Residue D41 is part of the active site. N-linked (GlcNAc...) asparagine glycans are attached at residues N49, N67, N112, N300, N363, N398, N430, and N531.

The protein belongs to the glycosyl hydrolase 32 family.

It is found in the secreted. The enzyme catalyses Hydrolysis of terminal, non-reducing (2-&gt;1)- and (2-&gt;6)-linked beta-D-fructofuranose residues in fructans.. Exo-inulinase involved in utilization of the plant storage polymer inulin, consisting of fructooligosaccharides with a degree of polymerization (DP) value from 2 to 60. Splits off terminal fructose units successively from the non-reducing end of the inulin molecule, and also hydrolyze sucrose and raffinose. This chain is Extracellular exo-inulinase inuE (inuE), found in Aspergillus niger (strain ATCC MYA-4892 / CBS 513.88 / FGSC A1513).